Consider the following 109-residue polypeptide: U4-lycotoxin-Ls1c (109 aa).

Residues 1–22 form the signal peptide; sequence MKVLVLFSVLFLTLFSYSSTEA. Positions 23–44 are excised as a propeptide; the sequence is IDEFDSDAEDDMLSLMANEQVR. Residues 45–88 form a knottin domain region; it reads AKACTPRLHDCSHDRHSCCRGELFKDVCYCFYPEGEDITEVCSC. 4 cysteine pairs are disulfide-bonded: C48–C63, C55–C72, C62–C88, and C74–C86. Residues 89–108 form a linear cationic cytotoxin domain region; the sequence is QQPKSHKYIEKVVDKAKTVV.

The protein belongs to the neurotoxin 19 (CSTX) family. 05 (U4-Lctx) subfamily. In terms of tissue distribution, expressed by the venom gland.

It localises to the secreted. Enhances the high-affinity desensitization of human P2RX3 purinoceptors. The protein is U4-lycotoxin-Ls1c of Lycosa singoriensis (Wolf spider).